A 239-amino-acid polypeptide reads, in one-letter code: MRLPPLQAAKFIRRYKRFMADVELANGNILTIHCANTGAMTGCAEKGDTVWYSDSKSTTRKYPCSWELTELSNGNLVCINTHRSNQLVQEALQNKVIKELAGYSEIYPEVKYGEENSRIDFLLKGEGLPDCYVEVKSITLVKNNIGMFPDAVTTRGQKHVRELLAMKKQGYRAVVLFAGLHNGFDCFKTAEYIDPDYDKLLRQAMKEGVEVYAYAGKFDKIQEIPTALSLAEVVPLCFN.

It belongs to the SfsA family.

This Mannheimia succiniciproducens (strain KCTC 0769BP / MBEL55E) protein is Sugar fermentation stimulation protein homolog.